Reading from the N-terminus, the 469-residue chain is MEKPRVRVRGIYATAVAKVLLDEGLELSDLSKKLKERIGHEGSPEPPHVTVKQSDDNPDQLVIIGFPEETDKVIQTLRKSMPYSVHHLARPNLHSAYVVEVDEECRTKLGEEEVRVKAKECYDGKKLIAEVVRSRVFPTDKLVMEEGFRVIGLYAELVIGRGSGVTFSKHITDLETKMLLMNLAAEVVRRGVKVHWRSSAKKAEPQVLLEELEKLYDEATKIMVKARDADHGTEVYPGERLDVVELTLEDKVILDEIRSKVVPTMPYHHSLKSGGDRMAAAVELGDKIAASSEVKAESVIDYIIDLARDMKYLNIIHKKVDGAEYSLGRARVRGNVDNYLVLERRSKDYGKYDGLDVVKEPGDLMITLVSPFSRYLIHAYYDQYGNEKGIYVNVNTGVEVGEGNVRYIDLEVDIIHKDGEWSVIDEDGLDRLPAPLRELAVAEVEKLLSHPDRIKEVVANARELLSAQL.

Belongs to the FAU-1 family.

Functionally, probable RNase involved in rRNA stability through maturation and/or degradation of precursor rRNAs. Binds to RNA in loop regions with AU-rich sequences. This Ignicoccus hospitalis (strain KIN4/I / DSM 18386 / JCM 14125) protein is Probable ribonuclease FAU-1.